The primary structure comprises 320 residues: Acetyl-coenzyme A carboxylase carboxyl transferase subunit beta (320 aa).

Positions 25 to 294 (VWTKCDSCGQ…AKDEDELLGE (270 aa)) constitute a CoA carboxyltransferase N-terminal domain. The Zn(2+) site is built by Cys-29, Cys-32, Cys-48, and Cys-51. The C4-type zinc finger occupies 29 to 51 (CDSCGQVLYRAELERNLEVCPKC). The span at 295–310 (EMIADDIESSDNEPEI) shows a compositional bias: acidic residues. Residues 295-320 (EMIADDIESSDNEPEINIETNKKEDV) are disordered.

The protein belongs to the AccD/PCCB family. In terms of assembly, acetyl-CoA carboxylase is a heterohexamer composed of biotin carboxyl carrier protein (AccB), biotin carboxylase (AccC) and two subunits each of ACCase subunit alpha (AccA) and ACCase subunit beta (AccD). The cofactor is Zn(2+).

It is found in the cytoplasm. The enzyme catalyses N(6)-carboxybiotinyl-L-lysyl-[protein] + acetyl-CoA = N(6)-biotinyl-L-lysyl-[protein] + malonyl-CoA. It functions in the pathway lipid metabolism; malonyl-CoA biosynthesis; malonyl-CoA from acetyl-CoA: step 1/1. Functionally, component of the acetyl coenzyme A carboxylase (ACC) complex. Biotin carboxylase (BC) catalyzes the carboxylation of biotin on its carrier protein (BCCP) and then the CO(2) group is transferred by the transcarboxylase to acetyl-CoA to form malonyl-CoA. This is Acetyl-coenzyme A carboxylase carboxyl transferase subunit beta from Proteus mirabilis (strain HI4320).